The sequence spans 334 residues: tRNA uridine(34) hydroxylase (334 aa).

Positions 123–217 constitute a Rhodanese domain; it reads SDPDVILVDT…YLEEVKAEES (95 aa). Cysteine 177 functions as the Cysteine persulfide intermediate in the catalytic mechanism.

It belongs to the TrhO family.

The enzyme catalyses uridine(34) in tRNA + AH2 + O2 = 5-hydroxyuridine(34) in tRNA + A + H2O. Its function is as follows. Catalyzes oxygen-dependent 5-hydroxyuridine (ho5U) modification at position 34 in tRNAs. This is tRNA uridine(34) hydroxylase from Shewanella baltica (strain OS185).